A 168-amino-acid chain; its full sequence is Plastocyanin, chloroplastic (168 aa).

Residues 1-69 (MATVTSTTVA…SAVLASNALA (69 aa)) constitute a chloroplast transit peptide. The region spanning 70 to 168 (VEVLLGASDG…AGMVGQVTVN (99 aa)) is the Plastocyanin-like domain. Positions 106, 153, 156, and 161 each coordinate Cu cation.

Belongs to the plastocyanin family. The cofactor is Cu(2+).

Its subcellular location is the plastid. The protein resides in the chloroplast thylakoid membrane. Its function is as follows. Participates in electron transfer between P700 and the cytochrome b6-f complex in photosystem I. This Pisum sativum (Garden pea) protein is Plastocyanin, chloroplastic (PETE).